Here is a 210-residue protein sequence, read N- to C-terminus: ATP-dependent Clp protease proteolytic subunit (210 aa).

Catalysis depends on serine 106, which acts as the Nucleophile. The active site involves histidine 131.

It belongs to the peptidase S14 family. In terms of assembly, fourteen ClpP subunits assemble into 2 heptameric rings which stack back to back to give a disk-like structure with a central cavity, resembling the structure of eukaryotic proteasomes.

It is found in the cytoplasm. It carries out the reaction Hydrolysis of proteins to small peptides in the presence of ATP and magnesium. alpha-casein is the usual test substrate. In the absence of ATP, only oligopeptides shorter than five residues are hydrolyzed (such as succinyl-Leu-Tyr-|-NHMec, and Leu-Tyr-Leu-|-Tyr-Trp, in which cleavage of the -Tyr-|-Leu- and -Tyr-|-Trp bonds also occurs).. Its function is as follows. Cleaves peptides in various proteins in a process that requires ATP hydrolysis. Has a chymotrypsin-like activity. Plays a major role in the degradation of misfolded proteins. The chain is ATP-dependent Clp protease proteolytic subunit from Rhodopseudomonas palustris (strain BisB18).